The chain runs to 449 residues: Gamma conglutin 1 (449 aa).

A signal peptide spans 1 to 33; the sequence is MARNMAHILHILVISLSYSFLFVSSSSQDSQSL. Positions 60 to 429 constitute a Peptidase A1 domain; sequence HWANIHKRTP…DLERSRVGFN (370 aa). 5 disulfide bridges follow: Cys-88-Cys-178, Cys-102-Cys-115, Cys-107-Cys-133, Cys-118-Cys-128, and Cys-350-Cys-391. Residue Asn-130 is glycosylated (N-linked (GlcNAc...) asparagine).

It belongs to the peptidase A1 family. As to quaternary structure, two-subunit monomeric unit made of alpha and beta subunits coupled by disulfide bonds (at pH 4.5 and under non-reducing conditions). Can also form oligomers including dimer, tetramer and cyclic hexamer (trimer of dimers) (at pH &gt; 5.5). Component of globulins complexes which accumulate in seeds. Interacts with flavonoids (e.g. apigenin glucosides) present in globulins complexes. Forms a static complex with vitexin. Undergoes very complex post-translational maturation; the proteolytic processing leading to the formation of two alpha and beta subunits is incomplete, leaving a certain amount of the protein in an uncut form. In terms of processing, glycosylated on alpha chain. In terms of tissue distribution, expressed in developing cotyledons and in the embryonic axis of germinating seeds. Accumulates in seeds, especially in the protein bodies of developing cotyledonary cells (at protein level). Also detected, at low levels, in plumules and radicles.

Its subcellular location is the secreted. The protein resides in the extracellular space. Its function is as follows. Sulfur-rich seed storage protein that remains undegraded at germination. The polypeptide is Gamma conglutin 1 (Lupinus angustifolius (Narrow-leaved blue lupine)).